A 238-amino-acid chain; its full sequence is Aspartate/glutamate leucyltransferase (238 aa).

Belongs to the R-transferase family. Bpt subfamily.

The protein localises to the cytoplasm. The catalysed reaction is N-terminal L-glutamyl-[protein] + L-leucyl-tRNA(Leu) = N-terminal L-leucyl-L-glutamyl-[protein] + tRNA(Leu) + H(+). The enzyme catalyses N-terminal L-aspartyl-[protein] + L-leucyl-tRNA(Leu) = N-terminal L-leucyl-L-aspartyl-[protein] + tRNA(Leu) + H(+). Functionally, functions in the N-end rule pathway of protein degradation where it conjugates Leu from its aminoacyl-tRNA to the N-termini of proteins containing an N-terminal aspartate or glutamate. The chain is Aspartate/glutamate leucyltransferase from Aeromonas hydrophila subsp. hydrophila (strain ATCC 7966 / DSM 30187 / BCRC 13018 / CCUG 14551 / JCM 1027 / KCTC 2358 / NCIMB 9240 / NCTC 8049).